An 814-amino-acid chain; its full sequence is Cellulase/esterase CelE (814 aa).

The signal sequence occupies residues 1–34 (MKKIVSLVCVLVMLVSILGSFSVVAASPVKGFQV). The tract at residues 35 to 354 (SGTKLLDASG…AVFWWDNGYY (320 aa)) is cellulase. Glu193 functions as the Proton donor; for cellulase activity in the catalytic mechanism. Glu316 serves as the catalytic Nucleophile; for cellulase activity. One can recognise a Dockerin domain in the interval 409–479 (ANILYGDVNG…LLRSIDKFPA (71 aa)). The Ca(2+) site is built by Asp415, Asn417, Asp419, Gly420, Lys421, Asp426, Asp451, Val452, Asn453, Asp455, Lys457, and Asp462. The tract at residues 490-814 (PGILYNGRFD…TAEIKNKLGW (325 aa)) is esterase. Ser612 (nucleophile; for esterase activity) is an active-site residue.

In the N-terminal section; belongs to the glycosyl hydrolase 5 (cellulase A) family. The protein in the C-terminal section; belongs to the carbohydrate esterase 2 (CE2) family.

It localises to the secreted. The enzyme catalyses Endohydrolysis of (1-&gt;4)-beta-D-glucosidic linkages in cellulose, lichenin and cereal beta-D-glucans.. It carries out the reaction Deacetylation of xylans and xylo-oligosaccharides.. Its pathway is glycan metabolism; cellulose degradation. It participates in glycan degradation; xylan degradation. Its activity is regulated as follows. Esterase activity of the CE2 module is inhibited when this domain binds to cellohexaose or beta-glucan. Its function is as follows. Multifunctional enzyme involved in the degradation of plant cell wall polysaccharides. Displays endoglucanase activity against carboxymethyl cellulose (CMC) and barley beta-glucan. Also catalyzes the deacetylation of acetylated birchwood xylan and glucomannan, with a preference for the latter, and of the synthetic substrate 4-nitrophenyl acetate (4-NPAc). This is Cellulase/esterase CelE from Acetivibrio thermocellus (strain ATCC 27405 / DSM 1237 / JCM 9322 / NBRC 103400 / NCIMB 10682 / NRRL B-4536 / VPI 7372) (Clostridium thermocellum).